Consider the following 360-residue polypeptide: Histidinol-phosphate aminotransferase (360 aa).

K222 carries the N6-(pyridoxal phosphate)lysine modification.

This sequence belongs to the class-II pyridoxal-phosphate-dependent aminotransferase family. Histidinol-phosphate aminotransferase subfamily. As to quaternary structure, homodimer. Pyridoxal 5'-phosphate serves as cofactor.

The enzyme catalyses L-histidinol phosphate + 2-oxoglutarate = 3-(imidazol-4-yl)-2-oxopropyl phosphate + L-glutamate. The protein operates within amino-acid biosynthesis; L-histidine biosynthesis; L-histidine from 5-phospho-alpha-D-ribose 1-diphosphate: step 7/9. The chain is Histidinol-phosphate aminotransferase from Listeria innocua serovar 6a (strain ATCC BAA-680 / CLIP 11262).